We begin with the raw amino-acid sequence, 288 residues long: MSEQEVTYTTLRFHKSSGLQNPVRPEETQRPRDVGHRECSVPWKFIVIVLGILCFLLLLTVAVLVIHIFRDGQEKHEQEKTLNNLRQEYQVMKNDSSLMEEMLRNKSSECKALNDSLHYLNREQNRCLRKTKIVLDCSQNKGKQVEGYWFCCGMKCYYFIMDDKKWNGCKQICQDYNLTLLKTNDEDELKFLKSQLQRNTYWISLTHHKSKEESQQIGDRPSKLDSAARNSVPNRQKCAYLSSFSTEEDDCARTHGCICEKRLNKFPIPGSCAKGRTQSALQRDEDES.

Residues 1-45 (MSEQEVTYTTLRFHKSSGLQNPVRPEETQRPRDVGHRECSVPWKF) are Cytoplasmic-facing. A helical; Signal-anchor for type II membrane protein transmembrane segment spans residues 46–66 (IVIVLGILCFLLLLTVAVLVI). At 67-288 (HIFRDGQEKH…SALQRDEDES (222 aa)) the chain is on the extracellular side. Asn94, Asn105, and Asn114 each carry an N-linked (GlcNAc...) asparagine glycan. The region spanning 144–263 (QVEGYWFCCG…THGCICEKRL (120 aa)) is the C-type lectin domain. 4 cysteine pairs are disulfide-bonded: Cys151/Cys156, Cys169/Cys257, Cys173/Cys259, and Cys238/Cys251. Asn177 carries N-linked (GlcNAc...) asparagine glycosylation.

As to quaternary structure, homodimer; disulfide-linked.

It localises to the membrane. Its function is as follows. Receptor on natural killer (NK) cells for class I MHC. The protein is Killer cell lectin-like receptor 2 (Klra2) of Mus musculus (Mouse).